Here is a 316-residue protein sequence, read N- to C-terminus: ATP synthase gamma chain (316 aa).

It belongs to the ATPase gamma chain family. As to quaternary structure, F-type ATPases have 2 components, CF(1) - the catalytic core - and CF(0) - the membrane proton channel. CF(1) has five subunits: alpha(3), beta(3), gamma(1), delta(1), epsilon(1). CF(0) has three main subunits: a, b and c.

It is found in the cellular thylakoid membrane. Its function is as follows. Produces ATP from ADP in the presence of a proton gradient across the membrane. The gamma chain is believed to be important in regulating ATPase activity and the flow of protons through the CF(0) complex. The sequence is that of ATP synthase gamma chain from Prochlorococcus marinus (strain AS9601).